Here is a 742-residue protein sequence, read N- to C-terminus: Ion-translocating oxidoreductase complex subunit C (742 aa).

4Fe-4S ferredoxin-type domains follow at residues G369–Y397 and K407–F436. Residues C377, C380, C383, C387, C416, C419, C422, and C426 each contribute to the [4Fe-4S] cluster site. The disordered stretch occupies residues K602–A719.

Belongs to the 4Fe4S bacterial-type ferredoxin family. RnfC subfamily. As to quaternary structure, the complex is composed of six subunits: RsxA, RsxB, RsxC, RsxD, RsxE and RsxG. [4Fe-4S] cluster serves as cofactor.

The protein resides in the cell inner membrane. In terms of biological role, part of a membrane-bound complex that couples electron transfer with translocation of ions across the membrane. Required to maintain the reduced state of SoxR. This chain is Ion-translocating oxidoreductase complex subunit C, found in Escherichia coli O6:H1 (strain CFT073 / ATCC 700928 / UPEC).